Here is a 551-residue protein sequence, read N- to C-terminus: MSNYAPFIKPYVEYNEHGWGPCEVPELDVPYQPFCKGDRLGKICDWTVSLPEKKFPSKYASTFGNSSQYAYFYEDDDSTFHLVDTTGSKAFKPYQRGRYRPNVRNNVRARGRTGRGSQAVGGPGGPAAGGSTANSTKYGKGRNTRNTQNVGRRFGRSAPTRLRESSVMVQSDWVSIEEIDFARLLKLALPNIKEGKDIATCGSLEYYDKLYDRVNLRNEKPLLKMDRVVHTVTTTDDPVIRRLSKTMGNVFATDEILATIMCCTRSNYSWDVVIEKLGTKVFLDKRDNDQFDLLTVNETSLEPPMDEEGSINSAHSLAMEATLINHNFSQQVLRIGDQEPRFKFEEPNPFEEQGVDLASMGYRYRQWDLGNEVVLIARCKHNGVIQGPNGEMQFLSIKALNEWDSKGSNSVEWRQKLDTQRGAVLASELRNNACKLARWTVEAVLAGSDQLKLGYVSRVNPRDHLRHVILGTQQFKPQEFATQINLNMDNAWGVLRCLIDIVMKQPDGKYLIMKDPNKSMIRLYDIPENAFDSDCNDDTESSETFVHSNDN.

A disordered region spans residues Asn-105 to Arg-152. Over residues Ala-119 to Ala-128 the composition is skewed to gly residues. The segment at Gln-290–Pro-304 is RNA gate.

The protein belongs to the eIF-3 subunit D family. In terms of assembly, component of the eukaryotic translation initiation factor 3 (eIF-3) complex. The eIF-3 complex interacts with pix.

The protein resides in the cytoplasm. Its function is as follows. mRNA cap-binding component of the eukaryotic translation initiation factor 3 (eIF-3) complex, which is involved in protein synthesis of a specialized repertoire of mRNAs and, together with other initiation factors, stimulates binding of mRNA and methionyl-tRNAi to the 40S ribosome. The eIF-3 complex specifically targets and initiates translation of a subset of mRNAs involved in cell proliferation. In the eIF-3 complex, eif3d specifically recognizes and binds the 7-methylguanosine cap of a subset of mRNAs. The polypeptide is Eukaryotic translation initiation factor 3 subunit D-2 (Drosophila erecta (Fruit fly)).